A 148-amino-acid polypeptide reads, in one-letter code: Leghemoglobin 3 (148 aa).

Positions 2-148 (GFTEKQEALV…LSAAIKKAMS (147 aa)) constitute a Globin domain. The residue at position 30 (Tyr30) is a Nitrated tyrosine. Heme b is bound at residue Ser45. Ser45 carries the phosphoserine modification. His63 contacts O2. Heme b contacts are provided by Lys66, His95, and Lys98. At Tyr136 the chain carries Nitrated tyrosine.

It belongs to the plant globin family. As to quaternary structure, monomer. Nitrated in effective nodules and particularly in hypoxic conditions; this mechanism may play a protective role in the symbiosis by buffering toxic peroxynitrite NO(2)(-). Nitration level decrease during nodule senescence. In terms of processing, phosphorylation at Ser-45 disrupts the molecular environment of its porphyrin ring oxygen binding pocket, thus leading to a reduced oxygen consumption and to the delivery of oxygen O(2) to symbiosomes. In terms of tissue distribution, stem nodules.

It is found in the cytoplasm. The protein resides in the cytosol. It localises to the nucleus. Its function is as follows. Leghemoglobin that reversibly binds oxygen O(2) through a pentacoordinated heme iron. In stem nodules, facilitates the diffusion of oxygen to the bacteroids while preventing the bacterial nitrogenase from being inactivated by buffering dioxygen, nitric oxide and carbon monoxide, and promoting the formation of reactive oxygen species (ROS, e.g. H(2)O(2)). This role is essential for symbiotic nitrogen fixation (SNF). The chain is Leghemoglobin 3 from Sesbania rostrata.